A 1811-amino-acid chain; its full sequence is Proteasome activator subunit 4 (1811 aa).

6 HEAT repeats span residues 563-599 (PYYY…ILPG), 1156-1193 (KILD…ESPH), 1442-1479 (KLHI…NIRL), 1613-1650 (SHLQ…RHTF), 1655-1692 (EDKQ…GGDE), and 1746-1783 (PSWL…THAD). A bromodomain-like (BRDL) region spans residues 1626–1711 (ADDSNWRIRS…SYAEANSIQK (86 aa)).

It belongs to the BLM10 family. Interacts with the 26S proteasomes.

In terms of biological role, associated component of the proteasome that specifically recognizes acetylated histones and promotes ATP- and ubiquitin-independent degradation of core histones during DNA damage response. Recognizes and binds acetylated histones via its bromodomain-like (BRDL) region and activates the proteasome by opening the gated channel for substrate entry. Binds to the core proteasome via its C-terminus, which occupies the same binding sites as the proteasomal ATPases, opening the closed structure of the proteasome via an active gating mechanism. involved in DNA damage response: binds to acetylated histones and promotes degradation of histones. This is Proteasome activator subunit 4 (PA200) from Arabidopsis thaliana (Mouse-ear cress).